Consider the following 324-residue polypeptide: Protoheme IX farnesyltransferase (324 aa).

9 helical membrane passes run 31–51 (LILL…SGQV), 56–76 (FLTT…INCI), 105–125 (VFAA…ANLL), 126–146 (SACL…YWLK), 153–173 (IVIG…AVTG), 181–201 (VLFA…AMMI), 214–234 (PVVN…LLLL), 238–258 (LLLV…AIVL), and 285–305 (FSIL…LPWT).

It belongs to the UbiA prenyltransferase family. Protoheme IX farnesyltransferase subfamily.

The protein localises to the cell inner membrane. The enzyme catalyses heme b + (2E,6E)-farnesyl diphosphate + H2O = Fe(II)-heme o + diphosphate. It participates in porphyrin-containing compound metabolism; heme O biosynthesis; heme O from protoheme: step 1/1. In terms of biological role, converts heme B (protoheme IX) to heme O by substitution of the vinyl group on carbon 2 of heme B porphyrin ring with a hydroxyethyl farnesyl side group. The protein is Protoheme IX farnesyltransferase of Acaryochloris marina (strain MBIC 11017).